We begin with the raw amino-acid sequence, 1592 residues long: Serine/threonine-protein kinase mrck-1 (1592 aa).

An involved in homo-dimerization region spans residues 1-954 (MAEPPPDDSA…IFSPVSISAM (954 aa)). One can recognise a Protein kinase domain in the interval 83-351 (FEVLKVIGKG…LSDFQLHPFF (269 aa)). Residues 89 to 97 (IGKGAFGEV) and Lys-112 contribute to the ATP site. Residue Asp-207 is the Proton acceptor of the active site. Residues 352-426 (EGIDWNTIRD…THGSLLSDAR (75 aa)) enclose the AGC-kinase C-terminal domain. Ser-415 carries the phosphoserine modification. Tyr-416 carries the phosphotyrosine modification. Coiled-coil stretches lie at residues 444–782 (ELME…KNNS) and 811–871 (LDLQ…IENS). The segment covering 782–796 (SPLTTSNYIQNTPSG) has biased composition (polar residues). Positions 782–801 (SPLTTSNYIQNTPSGWGSRR) are disordered. Residues 955–1534 (ERGHNFERMK…FRTIGKDDRS (580 aa)) are involved in binding to membranes, with a preference for di-phosphorylated phosphoinositides (PIPs). The segment at 957 to 1007 (GHNFERMKIKTPTKCGHCTSILIGLDRQGLFCQSCQYACHVSCAERVSQSC) adopts a Phorbol-ester/DAG-type zinc-finger fold. The Zn(2+) site is built by His-958, Cys-971, Cys-974, Cys-988, Cys-991, His-996, Cys-999, and Cys-1007. Residues 1026 to 1154 (GTAYEGLVKT…WVVALSELKT (129 aa)) form the PH domain. The CNH domain maps to 1181-1479 (IRVAQCCAII…KPLSGDGILS (299 aa)). Residues 1544–1557 (ISTPSDFMHIVHMG) form the CRIB domain. An involved in interaction with cdc-42 (GTP-bound). Deletion prevents rescue of a null mutant; furthermore deleted form of mrck-1 is no longer recruited to the cell cortex and instead appears to be completely cytoplasmic region spans residues 1544 to 1557 (ISTPSDFMHIVHMG).

The protein belongs to the protein kinase superfamily. AGC Ser/Thr protein kinase family. DMPK subfamily. Homodimer, via N-terminal domains. Interacts (via the CRIB domain) with cdc-42 (GTP-bound), but with a lower affinity for cdc-42 bound to GDP; the interaction is direct and may play a role in the recruitment of mrck-1 to the apical membrane. Requires Mg(2+) as cofactor. Expressed in embryonic and L4 larval seam cells and in embryonic dorsal and ventral epidermal cells. Also expressed in the pharynx throughout development and in sublateral nerve cords in the L4 larva.

Its subcellular location is the cytoplasm. The protein resides in the cell cortex. The enzyme catalyses L-seryl-[protein] + ATP = O-phospho-L-seryl-[protein] + ADP + H(+). It carries out the reaction L-threonyl-[protein] + ATP = O-phospho-L-threonyl-[protein] + ADP + H(+). In terms of biological role, serine/threonine-protein kinase. Involved in regulating endoderm precursor cell movements during early gastrulation; activates apical myosin and thereby increases actomyosin contractility and tension in the apical cell cortex, probably as a result of recruitment of mrck-1 to the cortex by a combination of interaction with active cdc-42 and membrane binding. May phosphorylate and inactivate the phosphatase mel-11, and thereby contribute to the regulation of myosin II contractility during embryonic elongation. Involved in controlling canal length and Golgi/ER integrity during excretory canal elongation. The chain is Serine/threonine-protein kinase mrck-1 from Caenorhabditis elegans.